Here is a 185-residue protein sequence, read N- to C-terminus: Potassium-transporting ATPase KdpC subunit 2 (185 aa).

A helical transmembrane segment spans residues 8 to 28 (LGLVLIMFVLCGFIFPLTVTA).

The protein belongs to the KdpC family. The system is composed of three essential subunits: KdpA, KdpB and KdpC.

The protein localises to the cell membrane. Its subcellular location is the membrane raft. Part of the high-affinity ATP-driven potassium transport (or Kdp) system, which catalyzes the hydrolysis of ATP coupled with the electrogenic transport of potassium into the cytoplasm. This subunit acts as a catalytic chaperone that increases the ATP-binding affinity of the ATP-hydrolyzing subunit KdpB by the formation of a transient KdpB/KdpC/ATP ternary complex. This is Potassium-transporting ATPase KdpC subunit 2 from Staphylococcus aureus (strain Mu50 / ATCC 700699).